A 402-amino-acid chain; its full sequence is Nicotinate phosphoribosyltransferase (402 aa).

Phosphohistidine; by autocatalysis is present on histidine 224.

Belongs to the NAPRTase family. Post-translationally, transiently phosphorylated on a His residue during the reaction cycle. Phosphorylation strongly increases the affinity for substrates and increases the rate of nicotinate D-ribonucleotide production. Dephosphorylation regenerates the low-affinity form of the enzyme, leading to product release.

It carries out the reaction nicotinate + 5-phospho-alpha-D-ribose 1-diphosphate + ATP + H2O = nicotinate beta-D-ribonucleotide + ADP + phosphate + diphosphate. The protein operates within cofactor biosynthesis; NAD(+) biosynthesis; nicotinate D-ribonucleotide from nicotinate: step 1/1. Functionally, catalyzes the synthesis of beta-nicotinate D-ribonucleotide from nicotinate and 5-phospho-D-ribose 1-phosphate at the expense of ATP. The chain is Nicotinate phosphoribosyltransferase from Neisseria gonorrhoeae (strain ATCC 700825 / FA 1090).